The chain runs to 220 residues: MFLRRTKAQLISPEEALPGRPVATPVTEPHEVLGTPLTGPFPEGTAVAVFGMGCFWGAERLFWTLPGVLTTSVGYAGGYTPNPSYDEVCSGRTGHAEVVHVRYDPTKITYEDLLKVFWENHDPTQGMRQGNDVGTQYRSAIYPTTDEQLTTARASRDAFAPVVARAGKGEITTEISPLGDYYLAEGYHQQYLAPTKNPGGYCNHGPNGLSCPVGVARTTD.

Residue Cys54 is part of the active site.

It belongs to the MsrA Met sulfoxide reductase family.

It carries out the reaction L-methionyl-[protein] + [thioredoxin]-disulfide + H2O = L-methionyl-(S)-S-oxide-[protein] + [thioredoxin]-dithiol. The enzyme catalyses [thioredoxin]-disulfide + L-methionine + H2O = L-methionine (S)-S-oxide + [thioredoxin]-dithiol. Has an important function as a repair enzyme for proteins that have been inactivated by oxidation. Catalyzes the reversible oxidation-reduction of methionine sulfoxide in proteins to methionine. This chain is Peptide methionine sulfoxide reductase MsrA, found in Salinispora tropica (strain ATCC BAA-916 / DSM 44818 / JCM 13857 / NBRC 105044 / CNB-440).